We begin with the raw amino-acid sequence, 212 residues long: 3-isopropylmalate dehydratase small subunit (212 aa).

It belongs to the LeuD family. LeuD type 1 subfamily. Heterodimer of LeuC and LeuD.

It carries out the reaction (2R,3S)-3-isopropylmalate = (2S)-2-isopropylmalate. It functions in the pathway amino-acid biosynthesis; L-leucine biosynthesis; L-leucine from 3-methyl-2-oxobutanoate: step 2/4. In terms of biological role, catalyzes the isomerization between 2-isopropylmalate and 3-isopropylmalate, via the formation of 2-isopropylmaleate. The chain is 3-isopropylmalate dehydratase small subunit from Laribacter hongkongensis (strain HLHK9).